Reading from the N-terminus, the 435-residue chain is Cytidine monophosphate-N-acetylneuraminic acid hydroxylase (435 aa).

This sequence belongs to the CMP-Neu5Ac hydroxylase family. Requires [2Fe-2S] cluster as cofactor.

Its subcellular location is the cytoplasm. It carries out the reaction CMP-N-acetyl-beta-neuraminate + 2 Fe(II)-[cytochrome b5] + O2 + 2 H(+) = CMP-N-glycoloyl-beta-neuraminate + 2 Fe(III)-[cytochrome b5] + H2O. Its pathway is amino-sugar metabolism; N-acetylneuraminate metabolism. Functionally, sialic acids are components of carbohydrate chains of glycoconjugates and are involved in cell-cell recognition and cell-pathogen interactions. Catalyzes the conversion of CMP-N-acetylneuraminic acid (CMP-Neu5Ac) into its hydroxylated derivative CMP-N-glycolylneuraminic acid (CMP-Neu5Gc), a sialic acid abundantly expressed at the surface of many cells. This chain is Cytidine monophosphate-N-acetylneuraminic acid hydroxylase, found in Sus scrofa (Pig).